The chain runs to 1073 residues: Guanylyl cyclase C (1073 aa).

The N-terminal stretch at 1–23 (MKTLLLDLALWSLLFQPGWLSFS) is a signal peptide. Residues 24-430 (SQVSQNCHNG…PNDITGRGPQ (407 aa)) lie on the Extracellular side of the membrane. 8 N-linked (GlcNAc...) asparagine glycosylation sites follow: Asn32, Asn75, Asn79, Asn195, Asn284, Asn307, Asn345, and Asn402. The chain crosses the membrane as a helical span at residues 431-454 (ILMIAVFTLTGAVVLLLLVALLML). The Cytoplasmic portion of the chain corresponds to 455-1073 (RKYRKDYELR…NTTDKESTYF (619 aa)). Positions 489–749 (LKIDDDKRRD…KIETTLAKIF (261 aa)) constitute a Protein kinase domain. Residues 824–954 (TIYFSDIVGF…DTVNTASRME (131 aa)) form the Guanylate cyclase domain.

The protein belongs to the adenylyl cyclase class-4/guanylyl cyclase family. Homotrimer. Interacts via its C-terminal region with NHERF4. Interacts with the lectin chaperone VIP36. Post-translationally, glycosylation at Asn-75 and/or Asn-79 is required for interaction with VIP36 while glycosylation at Asn-345 and Asn-402 modulates ligand-mediated GUCY2C activation.

It is found in the cell membrane. The protein localises to the endoplasmic reticulum membrane. It carries out the reaction GTP = 3',5'-cyclic GMP + diphosphate. In terms of biological role, guanylyl cyclase that catalyzes synthesis of cyclic GMP (cGMP) from GTP. Receptor for the E.coli heat-stable enterotoxin; E.coli enterotoxin markedly stimulates the accumulation of cGMP in mammalian cells expressing GUCY2C. Also activated by the endogenous peptides guanylin and uroguanylin. The polypeptide is Guanylyl cyclase C (Homo sapiens (Human)).